A 94-amino-acid polypeptide reads, in one-letter code: Small ribosomal subunit protein uS19 (94 aa).

The protein belongs to the universal ribosomal protein uS19 family.

In terms of biological role, protein S19 forms a complex with S13 that binds strongly to the 16S ribosomal RNA. The polypeptide is Small ribosomal subunit protein uS19 (Acidobacterium capsulatum (strain ATCC 51196 / DSM 11244 / BCRC 80197 / JCM 7670 / NBRC 15755 / NCIMB 13165 / 161)).